Here is a 266-residue protein sequence, read N- to C-terminus: NADH dehydrogenase [ubiquinone] iron-sulfur protein 3, mitochondrial (266 aa).

The transit peptide at 1-38 directs the protein to the mitochondrion; sequence MAAAVAAAARGCWQRLVGSAAPARVAGRPSVLLLPVRR.

This sequence belongs to the complex I 30 kDa subunit family. In terms of assembly, core subunit of respiratory chain NADH dehydrogenase (Complex I) which is composed of 45 different subunits. Interacts with NDUFAF3. Interacts with RAB5IF. Found in subcomplexes containing subunits NDUFS2, MT-ND1 and NDUFA13.

It localises to the mitochondrion inner membrane. The enzyme catalyses a ubiquinone + NADH + 5 H(+)(in) = a ubiquinol + NAD(+) + 4 H(+)(out). Its function is as follows. Core subunit of the mitochondrial membrane respiratory chain NADH dehydrogenase (Complex I) which catalyzes electron transfer from NADH through the respiratory chain, using ubiquinone as an electron acceptor. Essential for the catalytic activity and assembly of complex I. This chain is NADH dehydrogenase [ubiquinone] iron-sulfur protein 3, mitochondrial (NDUFS3), found in Bos taurus (Bovine).